The chain runs to 127 residues: Cytochrome c' (127 aa).

The residue at position 1 (glutamine 1) is a Pyrrolidone carboxylic acid. 6 residues coordinate heme c: arginine 12, glutamine 13, aspartate 67, cysteine 116, cysteine 119, and histidine 120.

Homodimer. Binds 1 heme c group covalently per subunit.

It is found in the periplasm. Functionally, cytochrome c' is the most widely occurring bacterial c-type cytochrome. Cytochromes c' are high-spin proteins and the heme has no sixth ligand. Their exact function is not known. The sequence is that of Cytochrome c' from Alcaligenes xylosoxydans xylosoxydans (Achromobacter xylosoxidans).